Consider the following 161-residue polypeptide: Large ribosomal subunit protein uL29c (161 aa).

The transit peptide at 1 to 61 (MATMSLAAAS…ERRAAAMVAM (61 aa)) directs the protein to the chloroplast.

This sequence belongs to the universal ribosomal protein uL29 family. As to quaternary structure, part of the 50S ribosomal subunit.

Its subcellular location is the plastid. It localises to the chloroplast. The chain is Large ribosomal subunit protein uL29c (RPL29) from Zea mays (Maize).